Here is a 416-residue protein sequence, read N- to C-terminus: Serine hydroxymethyltransferase (416 aa).

(6S)-5,6,7,8-tetrahydrofolate contacts are provided by residues leucine 121 and 125 to 127 (GHL). Residue lysine 229 is modified to N6-(pyridoxal phosphate)lysine.

Belongs to the SHMT family. Homodimer. Requires pyridoxal 5'-phosphate as cofactor.

It localises to the cytoplasm. It carries out the reaction (6R)-5,10-methylene-5,6,7,8-tetrahydrofolate + glycine + H2O = (6S)-5,6,7,8-tetrahydrofolate + L-serine. The protein operates within one-carbon metabolism; tetrahydrofolate interconversion. It participates in amino-acid biosynthesis; glycine biosynthesis; glycine from L-serine: step 1/1. Its function is as follows. Catalyzes the reversible interconversion of serine and glycine with tetrahydrofolate (THF) serving as the one-carbon carrier. This reaction serves as the major source of one-carbon groups required for the biosynthesis of purines, thymidylate, methionine, and other important biomolecules. Also exhibits THF-independent aldolase activity toward beta-hydroxyamino acids, producing glycine and aldehydes, via a retro-aldol mechanism. This chain is Serine hydroxymethyltransferase, found in Neisseria gonorrhoeae.